The primary structure comprises 182 residues: Adenine phosphoribosyltransferase (182 aa).

Belongs to the purine/pyrimidine phosphoribosyltransferase family. As to quaternary structure, homodimer.

The protein resides in the cytoplasm. The catalysed reaction is AMP + diphosphate = 5-phospho-alpha-D-ribose 1-diphosphate + adenine. It participates in purine metabolism; AMP biosynthesis via salvage pathway; AMP from adenine: step 1/1. In terms of biological role, catalyzes a salvage reaction resulting in the formation of AMP, that is energically less costly than de novo synthesis. This is Adenine phosphoribosyltransferase from Campylobacter curvus (strain 525.92).